The primary structure comprises 502 residues: Alpha-ketoglutarate-dependent dioxygenase FTO (502 aa).

Residues T32–S324 form a fe2OG dioxygenase domain region. Substrate-binding residues include R96 and Y108. N202 is a binding site for 2-oxoglutarate. The loop L1; predicted to block binding of double-stranded DNA or RNA stretch occupies residues P210–G221. An N6-acetyllysine modification is found at K213. Residues H228 and D230 each coordinate Fe cation. H228–E231 provides a ligand contact to substrate. Y292 is a binding site for 2-oxoglutarate. Residue H304 participates in Fe cation binding. 2-oxoglutarate is bound by residues R313–S315, T317, and R319.

It belongs to the fto family. In terms of assembly, monomer. May also exist as homodimer. It depends on Fe(2+) as a cofactor. Ubiquitous. Detected in brain, brain cortex, hypothalamus, cerebellum, liver, pancreas, heart, kidney, white adipose tissue and skeletal muscle. Most abundant in the brain, particularly in hypothalamic nuclei governing energy balance.

The protein localises to the nucleus. It is found in the nucleus speckle. The protein resides in the cytoplasm. The enzyme catalyses a 5'-end (N(7)-methyl 5'-triphosphoguanosine)-(N(6),2'-O-dimethyladenosine) in mRNA + 2-oxoglutarate + O2 = a 5'-end (N(7)-methyl 5'-triphosphoguanosine)-(2'-O-methyladenosine) in mRNA + formaldehyde + succinate + CO2. The catalysed reaction is an N(6)-methyladenosine in mRNA + 2-oxoglutarate + O2 = an adenosine in mRNA + formaldehyde + succinate + CO2. It catalyses the reaction N(6)-methyladenosine in U6 snRNA + 2-oxoglutarate + O2 = adenosine in U6 snRNA + formaldehyde + succinate + CO2. It carries out the reaction a 5'-end (N(7)-methyl 5'-triphosphoguanosine)-(N(6),2'-O-dimethyladenosine) in U6 snRNA + 2-oxoglutarate + O2 = a 5'-end (N(7)-methyl 5'-triphosphoguanosine)-(2'-O-methyladenosine) in U6 snRNA + formaldehyde + succinate + CO2. The enzyme catalyses an N(1)-methyladenosine in tRNA + 2-oxoglutarate + O2 = an adenosine in tRNA + formaldehyde + succinate + CO2. Its activity is regulated as follows. Activated by ascorbate. Inhibited by N-oxalylglycine, fumarate and succinate. Its function is as follows. RNA demethylase that mediates oxidative demethylation of different RNA species, such as mRNAs, tRNAs and snRNAs, and acts as a regulator of fat mass, adipogenesis and energy homeostasis. Specifically demethylates N(6)-methyladenosine (m6A) RNA, the most prevalent internal modification of messenger RNA (mRNA) in higher eukaryotes. M6A demethylation by FTO affects mRNA expression and stability. Also able to demethylate m6A in U6 small nuclear RNA (snRNA). Mediates demethylation of N(6),2'-O-dimethyladenosine cap (m6A(m)), by demethylating the N(6)-methyladenosine at the second transcribed position of mRNAs and U6 snRNA. Demethylation of m6A(m) in the 5'-cap by FTO affects mRNA stability by promoting susceptibility to decapping. Also acts as a tRNA demethylase by removing N(1)-methyladenine from various tRNAs. Has no activity towards 1-methylguanine. Has no detectable activity towards double-stranded DNA. Also able to repair alkylated DNA and RNA by oxidative demethylation: demethylates single-stranded RNA containing 3-methyluracil, single-stranded DNA containing 3-methylthymine and has low demethylase activity towards single-stranded DNA containing 1-methyladenine or 3-methylcytosine. Ability to repair alkylated DNA and RNA is however unsure in vivo. Involved in the regulation of fat mass, adipogenesis and body weight, thereby contributing to the regulation of body size and body fat accumulation. Involved in the regulation of thermogenesis and the control of adipocyte differentiation into brown or white fat cells. Regulates activity of the dopaminergic midbrain circuitry via its ability to demethylate m6A in mRNAs. This is Alpha-ketoglutarate-dependent dioxygenase FTO from Mus musculus (Mouse).